We begin with the raw amino-acid sequence, 236 residues long: Potassium/proton antiporter CemA (236 aa).

4 consecutive transmembrane segments (helical) span residues 12–32 (TVTSIKYFISFILFVLITNHV), 114–134 (IANVFADLLSLCIFVLALLLG), 161–181 (IILFTDIFVGFHSSHGWEILI), and 196–216 (FIFLFVATFPVVLDTVFKYWI).

This sequence belongs to the CemA family.

The protein localises to the plastid. Its subcellular location is the chloroplast inner membrane. It catalyses the reaction K(+)(in) + H(+)(out) = K(+)(out) + H(+)(in). Contributes to K(+)/H(+) antiport activity by supporting proton efflux to control proton extrusion and homeostasis in chloroplasts in a light-dependent manner to modulate photosynthesis. Prevents excessive induction of non-photochemical quenching (NPQ) under continuous-light conditions. Indirectly promotes efficient inorganic carbon uptake into chloroplasts. The chain is Potassium/proton antiporter CemA from Chlorokybus atmophyticus (Soil alga).